The following is a 536-amino-acid chain: Probable serine/threonine-protein kinase DDB_G0268550 (536 aa).

One can recognise a Protein kinase domain in the interval glutamate 14–leucine 305. Residues tyrosine 20–isoleucine 28 and lysine 51 each bind ATP. Aspartate 147 functions as the Proton acceptor in the catalytic mechanism. A disordered region spans residues aspartate 161–serine 192.

It belongs to the protein kinase superfamily. Ser/Thr protein kinase family. The cofactor is Mg(2+).

It catalyses the reaction L-seryl-[protein] + ATP = O-phospho-L-seryl-[protein] + ADP + H(+). The enzyme catalyses L-threonyl-[protein] + ATP = O-phospho-L-threonyl-[protein] + ADP + H(+). The chain is Probable serine/threonine-protein kinase DDB_G0268550 from Dictyostelium discoideum (Social amoeba).